A 174-amino-acid chain; its full sequence is Glycine-rich protein 5 (174 aa).

Residues 1 to 22 (MASKSLFLVALLVGSFAFTSFA) form the signal peptide.

Mostly expressed in immature seed pods, and, to a lower extent, in stems and leaves. Present in phloem and epiderm in leaves, stems, flowers and fruits.

The protein resides in the vacuole. Functionally, involved in organ growth by promoting cell elongation processes. This chain is Glycine-rich protein 5, found in Arabidopsis thaliana (Mouse-ear cress).